A 477-amino-acid polypeptide reads, in one-letter code: Adenylyl cyclase-associated protein 2 (477 aa).

Ala-2 bears the N-acetylalanine mark. 2 disordered regions span residues 224–261 and 274–323; these read VLSSGPGLPPPPPPPPPPGPPPLLENEGKKEESSPSRS and TKGL…KHAP. The span at 230-246 shows a compositional bias: pro residues; sequence GLPPPPPPPPPPGPPPL. Residues Ser-301 and Ser-309 each carry the phosphoserine modification. Residues 301 to 320 are compositionally biased toward low complexity; the sequence is SPTKSHTPSPTSPKSYPSQK. In terms of domain architecture, C-CAP/cofactor C-like spans 317 to 455; that stretch reads PSQKHAPVLE…QDGDYREFPI (139 aa).

The protein belongs to the CAP family.

Its subcellular location is the cell membrane. Its function is as follows. Involved in the regulation of actin polymerization. The protein is Adenylyl cyclase-associated protein 2 (CAP2) of Pongo abelii (Sumatran orangutan).